Here is a 334-residue protein sequence, read N- to C-terminus: Phenylalanine--tRNA ligase alpha subunit (334 aa).

Residue E249 participates in Mg(2+) binding.

It belongs to the class-II aminoacyl-tRNA synthetase family. Phe-tRNA synthetase alpha subunit type 1 subfamily. Tetramer of two alpha and two beta subunits. The cofactor is Mg(2+).

It localises to the cytoplasm. The enzyme catalyses tRNA(Phe) + L-phenylalanine + ATP = L-phenylalanyl-tRNA(Phe) + AMP + diphosphate + H(+). This is Phenylalanine--tRNA ligase alpha subunit from Desulfosudis oleivorans (strain DSM 6200 / JCM 39069 / Hxd3) (Desulfococcus oleovorans).